Here is a 58-residue protein sequence, read N- to C-terminus: Conotoxin Im5.4 (58 aa).

Residues 1 to 18 (MRCLPVVVFLLLLLSAAA) form the signal peptide. Residues 19 to 28 (APGVGSKTER) constitute a propeptide that is removed on maturation.

This sequence belongs to the conotoxin T superfamily. Contains 2 disulfide bonds that can be either 'C1-C3, C2-C4' or 'C1-C4, C2-C3', since these disulfide connectivities have been observed for conotoxins with cysteine framework V (for examples, see AC P0DQQ7 and AC P81755). As to expression, expressed by the venom duct.

Its subcellular location is the secreted. In terms of biological role, probable neurotoxin. This is Conotoxin Im5.4 from Conus imperialis (Imperial cone).